The sequence spans 187 residues: Elongation factor P 1 (187 aa).

The protein belongs to the elongation factor P family.

It localises to the cytoplasm. It functions in the pathway protein biosynthesis; polypeptide chain elongation. Functionally, involved in peptide bond synthesis. Stimulates efficient translation and peptide-bond synthesis on native or reconstituted 70S ribosomes in vitro. Probably functions indirectly by altering the affinity of the ribosome for aminoacyl-tRNA, thus increasing their reactivity as acceptors for peptidyl transferase. The chain is Elongation factor P 1 from Geobacter sulfurreducens (strain ATCC 51573 / DSM 12127 / PCA).